Reading from the N-terminus, the 300-residue chain is uncharacterized protein (300 aa).

Residues 67–179 (LAFEELEKEK…IAKANELKDS (113 aa)) are a coiled coil. Over residues 203 to 285 (STTASLSQSE…PSSQSTYQQQ (83 aa)) the composition is skewed to low complexity. Residues 203–300 (STTASLSQSE…KGFFARLFNL (98 aa)) are disordered.

This is an uncharacterized protein from Staphylococcus epidermidis (strain ATCC 12228 / FDA PCI 1200).